Reading from the N-terminus, the 425-residue chain is Serine/threonine-protein kinase VRK1 (425 aa).

The Protein kinase domain occupies 38–329 (WKLGSAVGQG…KLRGILQQGL (292 aa)). Residues 44-52 (VGQGGFGLL) and lysine 72 each bind ATP. Aspartate 178 (proton acceptor) is an active-site residue. Positions 343-425 (GVATNSTSLP…KSRGRPKKNS (83 aa)) are disordered. Positions 415–425 (KKSRGRPKKNS) are enriched in basic residues.

It belongs to the protein kinase superfamily. CK1 Ser/Thr protein kinase family. VRK subfamily.

Its subcellular location is the nucleus. It localises to the cytoplasm. The protein resides in the cajal body. It carries out the reaction L-seryl-[protein] + ATP = O-phospho-L-seryl-[protein] + ADP + H(+). The catalysed reaction is L-threonyl-[protein] + ATP = O-phospho-L-threonyl-[protein] + ADP + H(+). Serine/threonine kinase involved in the regulation of key cellular processes including the cell cycle, nuclear condensation, transcription regulation, and DNA damage response. Controls chromatin organization and remodeling by mediating phosphorylation of histone H3 on 'Thr-4' and histone H2AX (H2aXT4ph). It also phosphorylates KAT5 in response to DNA damage, promoting KAT5 association with chromatin and histone acetyltransferase activity. Is involved in the regulation of cell cycle progression of neural progenitors, and is required for proper cortical neuronal migration. Is involved in neurite elongation and branching in motor neurons, and has an essential role in Cajal bodies assembly, acting through COIL phosphorylation and the control of coilin degradation. Involved in Golgi disassembly during the cell cycle: following phosphorylation by PLK3 during mitosis, it is required to induce Golgi fragmentation. Phosphorylates BANF1: disrupts its ability to bind DNA, reduces its binding to LEM domain-containing proteins and causes its relocalization from the nucleus to the cytoplasm. Phosphorylates TP53BP1 and p53/TP53 on 'Thr-18', preventing the interaction between p53/TP53 and MDM2. Phosphorylates ATF2 which activates its transcriptional activity. Phosphorylates JUN. This Danio rerio (Zebrafish) protein is Serine/threonine-protein kinase VRK1 (vrk1).